A 232-amino-acid chain; its full sequence is Secreted LysM effector Mg3LysM (232 aa).

An N-terminal signal peptide occupies residues methionine 1–alanine 16. Residues threonine 47–isoleucine 91 form the LysM 1 domain. Residues asparagine 48, asparagine 100, asparagine 138, asparagine 195, asparagine 209, and asparagine 227 are each glycosylated (N-linked (GlcNAc...) asparagine). LysM domains follow at residues serine 120–threonine 165 and glycine 177–leucine 221.

This sequence belongs to the secreted LysM effector family.

In terms of biological role, secreted effector that enables the plant pathogenic fungus to manipulate host defenses for successful infection. Binds chitin fragments and blocks the activation of chitin-induced plant defense responses. Protects fungal hyphae against hydrolytic plant enzymes. This is Secreted LysM effector Mg3LysM from Zymoseptoria tritici (strain CBS 115943 / IPO323) (Speckled leaf blotch fungus).